We begin with the raw amino-acid sequence, 55 residues long: U-reduvitoxin-Pr2a (55 aa).

Residues 1–21 (MMKFLLVLFLITITLITMAYS) form the signal peptide. 3 cysteine pairs are disulfide-bonded: Cys-26–Cys-41, Cys-33–Cys-46, and Cys-40–Cys-51.

This sequence belongs to the venom Ptu1-like knottin family. As to expression, expressed by the venom gland (posterior main gland) (at protein level).

The protein resides in the secreted. Functionally, binds reversibly and blocks P/Q-type voltage-gated calcium channels (Cav). The polypeptide is U-reduvitoxin-Pr2a (Platymeris rhadamanthus (Red spot assassin bug)).